We begin with the raw amino-acid sequence, 52 residues long: Movement protein TGBp3 (52 aa).

Topologically, residues 1-3 are lumenal; it reads MHE. Residues 4-21 form a helical membrane-spanning segment; that stretch reads SHLVVILALLLLALWCLS. The Cytoplasmic segment spans residues 22-52; sequence TRPVQPSCHVEINGHSIIVTGNCWHSTQRPH.

The protein belongs to the Tymovirales TGBp3 protein family.

Its subcellular location is the host endoplasmic reticulum membrane. Its function is as follows. Plays a role in viral cell-to-cell propagation, by facilitating genome transport to neighboring plant cells through plasmosdesmata. May induce the formation of granular vesicles derived from the Endoplasmic reticulum, which align on actin filaments. The chain is Movement protein TGBp3 from Foxtail mosaic virus.